The primary structure comprises 264 residues: MEMO1 family protein Mbur_2394 (264 aa).

It belongs to the MEMO1 family.

The sequence is that of MEMO1 family protein Mbur_2394 from Methanococcoides burtonii (strain DSM 6242 / NBRC 107633 / OCM 468 / ACE-M).